The sequence spans 1056 residues: Outer capsid protein VP5 (1056 aa).

It belongs to the orthoreovirus lambda-2 protein family.

It is found in the virion. The catalysed reaction is a 5'-end diphospho-ribonucleoside in mRNA + GTP + H(+) = a 5'-end (5'-triphosphoguanosine)-ribonucleoside in mRNA + diphosphate. It catalyses the reaction a 5'-end (5'-triphosphoguanosine)-ribonucleoside in mRNA + S-adenosyl-L-methionine = a 5'-end (N(7)-methyl 5'-triphosphoguanosine)-ribonucleoside in mRNA + S-adenosyl-L-homocysteine. Its function is as follows. Outer capsid protein involved in mRNA capping. Catalyzes the last 3 enzymatic activities for formation of the 5' cap structure on the viral plus-strand transcripts, namely the RNA guanylyltransferase, RNA-7N- and RNA-2'O-methyltransferase activities. This Aedes pseudoscutellaris reovirus (isolate France) (ApRV) protein is Outer capsid protein VP5 (S5).